Here is a 342-residue protein sequence, read N- to C-terminus: L-threonine 3-dehydrogenase (342 aa).

Zn(2+) is bound at residue cysteine 38. Catalysis depends on charge relay system residues threonine 40 and histidine 43. 6 residues coordinate Zn(2+): histidine 63, glutamate 64, cysteine 93, cysteine 96, cysteine 99, and cysteine 107. Residues isoleucine 175, aspartate 195, arginine 200, leucine 262–isoleucine 264, and isoleucine 286–tyrosine 287 each bind NAD(+).

The protein belongs to the zinc-containing alcohol dehydrogenase family. Homotetramer. Requires Zn(2+) as cofactor.

Its subcellular location is the cytoplasm. The catalysed reaction is L-threonine + NAD(+) = (2S)-2-amino-3-oxobutanoate + NADH + H(+). Its pathway is amino-acid degradation; L-threonine degradation via oxydo-reductase pathway; glycine from L-threonine: step 1/2. In terms of biological role, catalyzes the NAD(+)-dependent oxidation of L-threonine to 2-amino-3-ketobutyrate. The protein is L-threonine 3-dehydrogenase of Paraburkholderia phymatum (strain DSM 17167 / CIP 108236 / LMG 21445 / STM815) (Burkholderia phymatum).